Here is a 218-residue protein sequence, read N- to C-terminus: Cytochrome c biogenesis ATP-binding export protein CcmA (218 aa).

An ABC transporter domain is found at 2–217 (LEAKNLTCIR…KSCLSACCAV (216 aa)). 34–41 (GPNGAGKT) contacts ATP.

This sequence belongs to the ABC transporter superfamily. CcmA exporter (TC 3.A.1.107) family. As to quaternary structure, the complex is composed of two ATP-binding proteins (CcmA) and two transmembrane proteins (CcmB).

It localises to the cell inner membrane. It carries out the reaction heme b(in) + ATP + H2O = heme b(out) + ADP + phosphate + H(+). In terms of biological role, part of the ABC transporter complex CcmAB involved in the biogenesis of c-type cytochromes; once thought to export heme, this seems not to be the case, but its exact role is uncertain. Responsible for energy coupling to the transport system. This Yersinia pestis protein is Cytochrome c biogenesis ATP-binding export protein CcmA.